Here is a 332-residue protein sequence, read N- to C-terminus: Inositol 2-dehydrogenase 2 (332 aa).

The protein belongs to the Gfo/Idh/MocA family. As to quaternary structure, homotetramer.

The enzyme catalyses myo-inositol + NAD(+) = scyllo-inosose + NADH + H(+). Its function is as follows. Involved in the oxidation of myo-inositol (MI) to 2-keto-myo-inositol (2KMI or 2-inosose). The polypeptide is Inositol 2-dehydrogenase 2 (Paenarthrobacter aurescens (strain TC1)).